Here is a 457-residue protein sequence, read N- to C-terminus: Exodeoxyribonuclease 7 large subunit (457 aa).

This sequence belongs to the XseA family. In terms of assembly, heterooligomer composed of large and small subunits.

The protein resides in the cytoplasm. The enzyme catalyses Exonucleolytic cleavage in either 5'- to 3'- or 3'- to 5'-direction to yield nucleoside 5'-phosphates.. Bidirectionally degrades single-stranded DNA into large acid-insoluble oligonucleotides, which are then degraded further into small acid-soluble oligonucleotides. The chain is Exodeoxyribonuclease 7 large subunit from Escherichia coli O127:H6 (strain E2348/69 / EPEC).